The primary structure comprises 89 residues: UPF0223 protein BcerKBAB4_3787 (89 aa).

Belongs to the UPF0223 family.

This Bacillus mycoides (strain KBAB4) (Bacillus weihenstephanensis) protein is UPF0223 protein BcerKBAB4_3787.